Here is a 376-residue protein sequence, read N- to C-terminus: MSDVLELTCDLIARASVTPADAGCQAAIAQRLRAAGFGCEHLRLGEVENLWATHGSGAPVLVLLGHTDVVPPGPREAWTSDPFDPQIRDGVLYGRGAADMKGSVAAFVVAAEQFVAAHPTHSGTLAVLLTSDEEGDAIDGVRRVAEVFRERGQTIDWCITGEPSSTERLGDLLRVGRRGSLSGTLTVKGVQGHVAYPHKARNPIHLAAPALAELVARQWDDGFESFPPTSLQLSNIHAGTGANNVIPGELQVAFNLRYTPHWDAPRLEAEITALLDRHALDYTLRWHRSGEPFYTPEGRLRSVAREVLGEFAGAPPEESTGGGTSDARFIAPLGAQCIEVGPVNASIHQVDEHVRVADLQALPALYRTLIERLLVE.

His66 contacts Zn(2+). The active site involves Asp68. Asp99 lines the Zn(2+) pocket. The Proton acceptor role is filled by Glu133. Positions 134, 162, and 348 each coordinate Zn(2+).

The protein belongs to the peptidase M20A family. DapE subfamily. In terms of assembly, homodimer. Zn(2+) is required as a cofactor. It depends on Co(2+) as a cofactor.

It carries out the reaction N-succinyl-(2S,6S)-2,6-diaminopimelate + H2O = (2S,6S)-2,6-diaminopimelate + succinate. Its pathway is amino-acid biosynthesis; L-lysine biosynthesis via DAP pathway; LL-2,6-diaminopimelate from (S)-tetrahydrodipicolinate (succinylase route): step 3/3. Its function is as follows. Catalyzes the hydrolysis of N-succinyl-L,L-diaminopimelic acid (SDAP), forming succinate and LL-2,6-diaminopimelate (DAP), an intermediate involved in the bacterial biosynthesis of lysine and meso-diaminopimelic acid, an essential component of bacterial cell walls. This is Succinyl-diaminopimelate desuccinylase from Xanthomonas euvesicatoria pv. vesicatoria (strain 85-10) (Xanthomonas campestris pv. vesicatoria).